A 260-amino-acid chain; its full sequence is Taurine import ATP-binding protein TauB (260 aa).

Residues 6–235 (AQQVSVVYAS…RYAHGEPMRS (230 aa)) enclose the ABC transporter domain. 40–47 (GASGCGKS) lines the ATP pocket.

Belongs to the ABC transporter superfamily. Taurine importer (TC 3.A.1.17.1) family. In terms of assembly, the complex is composed of two ATP-binding proteins (TauB), two transmembrane proteins (TauC) and a solute-binding protein (TauA).

The protein resides in the cell inner membrane. The catalysed reaction is taurine(out) + ATP + H2O = taurine(in) + ADP + phosphate + H(+). Functionally, part of the ABC transporter complex TauABC involved in taurine import. Responsible for energy coupling to the transport system. The chain is Taurine import ATP-binding protein TauB from Burkholderia pseudomallei (strain 1710b).